Reading from the N-terminus, the 77-residue chain is Acyl carrier protein (77 aa).

Residues 2-77 enclose the Carrier domain; sequence SNIEERVRNI…SAIDYVVNNG (76 aa). S37 carries the post-translational modification O-(pantetheine 4'-phosphoryl)serine.

This sequence belongs to the acyl carrier protein (ACP) family. In terms of processing, 4'-phosphopantetheine is transferred from CoA to a specific serine of apo-ACP by AcpS. This modification is essential for activity because fatty acids are bound in thioester linkage to the sulfhydryl of the prosthetic group.

It localises to the cytoplasm. It participates in lipid metabolism; fatty acid biosynthesis. In terms of biological role, carrier of the growing fatty acid chain in fatty acid biosynthesis. In Psychromonas ingrahamii (strain DSM 17664 / CCUG 51855 / 37), this protein is Acyl carrier protein.